A 107-amino-acid polypeptide reads, in one-letter code: uncharacterized protein (107 aa).

It localises to the mitochondrion. This is an uncharacterized protein from Arabidopsis thaliana (Mouse-ear cress).